A 180-amino-acid polypeptide reads, in one-letter code: Cytokinin-beta-glucosidase 2 (180 aa).

Functionally, hydrolyzes cytokinin glucosides thus liberating free cytokinins. In Linaria vulgaris (Toadflax), this protein is Cytokinin-beta-glucosidase 2 (ROLC2).